Here is a 591-residue protein sequence, read N- to C-terminus: Alternative cytochrome c oxidase subunit 1 (591 aa).

The chain crosses the membrane as a helical span at residues 40 to 60 (VIAIQYSLTASAIGLVALVLS). Heme b is bound at residue histidine 88. 11 consecutive transmembrane segments (helical) span residues 90–110 (MIMVIYLLTALFLGGFGNYLI), 126–146 (MLSYWVYLLAVLVLASAFFVP), 172–192 (GIVLMLSSLILFIIGFTMGGL), 215–235 (VWGIFTATVMALLAFPALFVG), 274–294 (LFWFFGHPEVYIVALPAFGIV), 313–333 (VWAIVAIGALSFVVWAHHMYV), 337–357 (YPYFGFFFATTTLIIAIPTAI), 377–397 (MLFALGFIITFVNGGLTGLFL), 412–432 (VVAHFHMVMGVAPIMVVLGAI), 453–473 (FWVTFLGAYLIFFPMHYLGLL), and 498–518 (FITVVALTVGFAQMVFLFNLV). Cu cation-binding residues include histidine 280, tyrosine 284, histidine 329, and histidine 330. A cross-link (1'-histidyl-3'-tyrosine (His-Tyr)) is located at residues 280–284 (HPEVY). Heme b-binding residues include histidine 415 and histidine 417.

Belongs to the heme-copper respiratory oxidase family. As to quaternary structure, this alternate cytochrome c oxidase consists of a subunit I and two cytochromes c. Equivalents to subunit 2 and 3 are not present in this complex.

The protein resides in the cell membrane. The catalysed reaction is 4 Fe(II)-[cytochrome c] + O2 + 8 H(+)(in) = 4 Fe(III)-[cytochrome c] + 2 H2O + 4 H(+)(out). Functionally, cytochrome c oxidase is the component of the respiratory chain that catalyzes the reduction of oxygen to water. Subunits 1-3 form the functional core of the enzyme complex. Co I is the catalytic subunit of the enzyme. Electrons originating in cytochrome c are transferred via the copper A center of subunit 2 and a low-spin heme of subunit 1 to the bimetallic center formed by a high-spin heme and copper B. The polypeptide is Alternative cytochrome c oxidase subunit 1 (coxN) (Bradyrhizobium diazoefficiens (strain JCM 10833 / BCRC 13528 / IAM 13628 / NBRC 14792 / USDA 110)).